A 345-amino-acid polypeptide reads, in one-letter code: Methionine import ATP-binding protein MetN (345 aa).

The ABC transporter domain occupies 2 to 241; the sequence is IKLKNISKVF…PKTLLAQEFI (240 aa). Residue 38–45 coordinates ATP; the sequence is GASGAGKS.

It belongs to the ABC transporter superfamily. Methionine importer (TC 3.A.1.24) family. As to quaternary structure, the complex is composed of two ATP-binding proteins (MetN), two transmembrane proteins (MetI) and a solute-binding protein (MetQ).

Its subcellular location is the cell inner membrane. It catalyses the reaction L-methionine(out) + ATP + H2O = L-methionine(in) + ADP + phosphate + H(+). The catalysed reaction is D-methionine(out) + ATP + H2O = D-methionine(in) + ADP + phosphate + H(+). Its function is as follows. Part of the ABC transporter complex MetNIQ involved in methionine import. Responsible for energy coupling to the transport system. This Histophilus somni (strain 129Pt) (Haemophilus somnus) protein is Methionine import ATP-binding protein MetN.